A 400-amino-acid chain; its full sequence is Hyaluronidase (400 aa).

The signal sequence occupies residues 1–19 (MQTILVLTTFLSAWFLAVG). Disulfide bonds link Cys-31–Cys-319, Cys-196–Cys-209, Cys-344–Cys-355, Cys-349–Cys-384, and Cys-386–Cys-395. Residue Glu-120 is the Proton donor of the active site. Asn-129 and Asn-166 each carry an N-linked (GlcNAc...) asparagine glycan. N-linked (GlcNAc...) asparagine glycans are attached at residues Asn-243 and Asn-275. Positions 340–396 (NVARCSKQACSGRGRCTWPKDTSVIAWKFLVEKEDYDFYLGDIECKCVEGYEGRYCE) constitute an EGF-like domain.

Belongs to the glycosyl hydrolase 56 family. In terms of assembly, monomer. As to expression, expressed by the venom gland.

It is found in the secreted. The enzyme catalyses Random hydrolysis of (1-&gt;4)-linkages between N-acetyl-beta-D-glucosamine and D-glucuronate residues in hyaluronate.. In terms of biological role, spider venom endo-hyaluronidase that is able to degrade purified hyaluronic acid (HA) and chondroitin sulfate (CS). Has no activity on dermatan sulfate (DS) and heparan sulfate (HS). Also increases the dermonecrotic effect of the dermonecrotic toxin (AC P0CE80), when injected in rabbit skin, supporting the hypothesis that venom hyaluronidases are spreading factors. In Loxosceles intermedia (Brown spider), this protein is Hyaluronidase.